A 111-amino-acid polypeptide reads, in one-letter code: Dynein light chain Tctex-type (111 aa).

The protein belongs to the dynein light chain Tctex-type family. In terms of assembly, the cytoplasmic dynein complex consists of two catalytic heavy chains (HCs) and a number of non-catalytic subunits presented by intermediate chains (ICs), light intermediate chains (LICs) and light chains (LCs).

It is found in the cytoplasm. It localises to the cytoskeleton. In terms of biological role, acts as one of several non-catalytic accessory components of the cytoplasmic dynein complex that are thought to be involved in linking dynein to cargos and to adapter proteins that regulate dynein function. Cytoplasmic dynein acts as a motor for the intracellular retrograde motility of vesicles and organelles along microtubules. Required for spermatid differentiation. Is not required for polarized transport in rhabdomere development and appears to be a non-essential component of the cytoplasmic dynein complex. This Drosophila melanogaster (Fruit fly) protein is Dynein light chain Tctex-type (Dlc90F).